Here is a 421-residue protein sequence, read N- to C-terminus: 4-hydroxy-3-methylbut-2-en-1-yl diphosphate synthase (flavodoxin) (421 aa).

[4Fe-4S] cluster-binding residues include Cys-298, Cys-301, Cys-344, and Glu-351.

The protein belongs to the IspG family. Requires [4Fe-4S] cluster as cofactor.

It carries out the reaction (2E)-4-hydroxy-3-methylbut-2-enyl diphosphate + oxidized [flavodoxin] + H2O + 2 H(+) = 2-C-methyl-D-erythritol 2,4-cyclic diphosphate + reduced [flavodoxin]. The protein operates within isoprenoid biosynthesis; isopentenyl diphosphate biosynthesis via DXP pathway; isopentenyl diphosphate from 1-deoxy-D-xylulose 5-phosphate: step 5/6. In terms of biological role, converts 2C-methyl-D-erythritol 2,4-cyclodiphosphate (ME-2,4cPP) into 1-hydroxy-2-methyl-2-(E)-butenyl 4-diphosphate. This is 4-hydroxy-3-methylbut-2-en-1-yl diphosphate synthase (flavodoxin) from Neisseria meningitidis serogroup C (strain 053442).